The chain runs to 190 residues: Biphenyl-2,3-diol 1,2-dioxygenase 2 (190 aa).

The VOC domain maps to 6–124; sequence KFAHVVLQTS…DGNFVELQID (119 aa). Fe cation is bound by residues histidine 9, histidine 72, and glutamate 120.

The protein belongs to the extradiol ring-cleavage dioxygenase family. Homohexamer. Fe(2+) is required as a cofactor.

It carries out the reaction biphenyl-2,3-diol + O2 = 2-hydroxy-6-oxo-6-phenylhexa-2,4-dienoate + H(+). It participates in xenobiotic degradation; biphenyl degradation; 2-hydroxy-2,4-pentadienoate and benzoate from biphenyl: step 3/4. The chain is Biphenyl-2,3-diol 1,2-dioxygenase 2 (bphC2) from Rhodococcus globerulus.